The primary structure comprises 945 residues: Argonaute protein wago-1 (945 aa).

The span at 1 to 20 shows a compositional bias: pro residues; that stretch reads MSPHPPQPHPPMPPMPPVTA. The tract at residues 1–41 is disordered; that stretch reads MSPHPPQPHPPMPPMPPVTAPPGAMTPMPPVPADAQKLHQS. The region spanning 322-432 is the PAZ domain; it reads TVIQKLFDIT…FPAELMTVSR (111 aa). One can recognise a Piwi domain in the interval 636–899; that stretch reads VKDGKRLTLE…PLYVANEYAK (264 aa).

Belongs to the Argonaute family. WAGO subfamily. In terms of assembly, interacts with rde-12. Interacts with znfx-1. In terms of tissue distribution, enriched in sperm and oocytes.

Its subcellular location is the cytoplasmic granule. Argonaute protein which is involved in the endogenous small interfering RNA (endo-siRNA) pathway. Interacts with secondary 22G-RNAs, which are RNA-dependent RNA polymerase-derived endo-siRNAs, typically 22 nucleotides in length with a 5'guanosine residue. In the germline, functions in a genome surveillance system to silence transposons and aberrant transcripts. The polypeptide is Argonaute protein wago-1 (Caenorhabditis elegans).